The chain runs to 537 residues: MGQTLTTPLSLTLTHFSDVRARAHNLSVGVRKGRWQTFCSSEWPTLHVGWPRDGTFDLSVILQVKTKVMDPGPHGHPDQVAYIITWEDLVRNPPPWVKPFLHTPSTSKSTLLALEVPKNRTLDPPKPVLPDESQQDLLFQDPLPHPPHNPLLEPPPYNSPSPPVLSPVSPTTPSAPTPSSLVSSSTPPSSPAPPELTPRTPPQTPRLRLRRAEGQDGPSTWQSSLFPLRTVNRTIQYWPFSASDLYNWKTHNPSFSQDPQALTSLIESILLTHQPTWDDCQQLLQVLLTTEERQRVLLEARKNVPGPGGLPTQLPNEIDEGFPLTRPDWDYETAPGRESLRIYRQALLAGLKGAGKRPTNLAKVRTITQGKDESPAAFMERLLEGFRMYTPFDPEAPEHKATVAMSFIDQAALDIKGKLQRLDGIQTHGLQELVREAEKVYNKRETPEEREARLIKEQEEREDRRDRKRDKHLTKILAAVVTEKRAGKSGETRRRPKVDKDQCAYCKERGHWIKDCPKRPRDQKKPAPVLTLGEDSE.

The N-myristoyl glycine; by host moiety is linked to residue Gly2. 4 disordered regions span residues 137–221 (LLFQ…PSTW), 302–322 (KNVPGPGGLPTQLPNEIDEGF), 443–471 (KRETPEEREARLIKEQEEREDRRDRKRDK), and 514–537 (KDCPKRPRDQKKPAPVLTLGEDSE). Residues 143-165 (LPHPPHNPLLEPPPYNSPSPPVL) show a composition bias toward pro residues. A PPXY motif motif is present at residues 154–157 (PPPY). The segment covering 166 to 187 (SPVSPTTPSAPTPSSLVSSSTP) has biased composition (low complexity). The short motif at 173 to 176 (PSAP) is the PTAP/PSAP motif element. The segment covering 188-204 (PSSPAPPELTPRTPPQT) has biased composition (pro residues). 2 stretches are compositionally biased toward basic and acidic residues: residues 443–465 (KRETPEEREARLIKEQEEREDRR) and 514–525 (KDCPKRPRDQKK). A CCHC-type zinc finger spans residues 501–518 (DQCAYCKERGHWIKDCPK).

Homohexamer; further associates as homomultimer. The virus core is composed of a lattice formed from hexagonal rings, each containing six capsid monomers. In terms of assembly, interacts (via PPXY motif) with host NEDD4. Interacts (via PSAP motif) with host TSG101. Post-translationally, specific enzymatic cleavages by the viral protease yield mature proteins. The protease is released by autocatalytic cleavage. The polyprotein is cleaved during and after budding, this process is termed maturation. In terms of processing, RNA-binding phosphoprotein p12 is phosphorylated on serine residues.

The protein resides in the virion. It localises to the host cell membrane. It is found in the host late endosome membrane. The protein localises to the host endosome. Its subcellular location is the host multivesicular body. The protein resides in the host cytoplasm. Plays a role in budding and is processed by the viral protease during virion maturation outside the cell. During budding, it recruits, in a PPXY-dependent or independent manner, Nedd4-like ubiquitin ligases that conjugate ubiquitin molecules to Gag, or to Gag binding host factors. Interaction with HECT ubiquitin ligases probably links the viral protein to the host ESCRT pathway and facilitates release. In terms of biological role, targets Gag and gag-pol polyproteins to the plasma membrane via a multipartite membrane binding signal, that includes its myristoylated N-terminus. Also mediates nuclear localization of the pre-integration complex. Functionally, constituent of the pre-integration complex (PIC) which tethers the latter to mitotic chromosomes. Its function is as follows. Forms the spherical core of the virion that encapsulates the genomic RNA-nucleocapsid complex. Involved in the packaging and encapsidation of two copies of the genome. Binds with high affinity to conserved elements within the packaging signal, located near the 5'-end of the genome. This binding is dependent on genome dimerization. The chain is Gag polyprotein (gag) from Papio (baboons).